We begin with the raw amino-acid sequence, 87 residues long: Small ribosomal subunit protein bS20 (87 aa).

The disordered stretch occupies residues 1–29 (MANTAQARKRARQAVKQNAHNSSQRSTLR). The segment covering 20–29 (HNSSQRSTLR) has biased composition (polar residues).

This sequence belongs to the bacterial ribosomal protein bS20 family.

Binds directly to 16S ribosomal RNA. This chain is Small ribosomal subunit protein bS20, found in Herminiimonas arsenicoxydans.